The following is a 478-amino-acid chain: MAPLRPFFILALVAWVSLADQESCKGRCTQGFMASKKCQCDELCTYYQSCCADYMEQCKPQVTRGDVFTMPEDDYWSYDYVEEPKNNTNTGVQPENTSPPGDLNPRTDGTLKPTAFLDPEEQPSTPAPKVEQQEEILRPDTTDQGTPEFPEEELCSGKPFDAFTDLKNGSLFAFRGQYCYELDETAVRPGYPKLIQDVWGIEGPIDAAFTRINCQGKTYLFKGSQYWRFEDGVLDPGYPRNISEGFSGIPDNVDAAFALPAHRYSGRERVYFFKGKQYWEYEFQQQPSQEECEGSSLSAVFEHFALLQRDSWENIFELLFWGRSSDGAREPQFISRNWHGVPGKVDAAMAGRIYVTGSLSHSAQAKKQKSKRRSRKRYRSRRGRGHRRSQSSNSRRSSRSIWFSLFSSEESGLGTYNNYDYDMDWLVPATCEPIQSVYFFSGDKYYRVNLRTRRVDSVNPPYPRSIAQYWLGCPTSEK.

The signal sequence occupies residues 1-19 (MAPLRPFFILALVAWVSLA). The 44-residue stretch at 20–63 (DQESCKGRCTQGFMASKKCQCDELCTYYQSCCADYMEQCKPQVT) folds into the SMB domain. 7 cysteine pairs are disulfide-bonded: cysteine 24–cysteine 28, cysteine 24–cysteine 40, cysteine 28–cysteine 58, cysteine 38–cysteine 40, cysteine 38–cysteine 51, cysteine 44–cysteine 50, and cysteine 51–cysteine 58. The Cell attachment site motif lies at 64 to 66 (RGD). Threonine 69 bears the Phosphothreonine mark. Tyrosine 75, tyrosine 78, and tyrosine 80 each carry sulfotyrosine. The disordered stretch occupies residues 82–153 (EEPKNNTNTG…QGTPEFPEEE (72 aa)). A glycan (N-linked (GlcNAc...) asparagine) is linked at asparagine 86. Polar residues predominate over residues 86–99 (NNTNTGVQPENTSP). Residues 131-141 (EQQEEILRPDT) show a composition bias toward basic and acidic residues. 3 Hemopexin repeats span residues 157-201 (GKPF…VWGI), 202-249 (EGPI…FSGI), and 250-304 (PDNV…FEHF). N-linked (GlcNAc...) asparagine glycosylation is found at asparagine 168 and asparagine 241. Tyrosine 278 and tyrosine 281 each carry sulfotyrosine. Cysteine 292 and cysteine 431 are joined by a disulfide. Serine 311 and serine 362 each carry phosphoserine. The disordered stretch occupies residues 359-395 (LSHSAQAKKQKSKRRSRKRYRSRRGRGHRRSQSSNSR). A compositionally biased stretch (basic residues) spans 364-389 (QAKKQKSKRRSRKRYRSRRGRGHRRS). The interval 366-399 (KKQKSKRRSRKRYRSRRGRGHRRSQSSNSRRSSR) is heparin-binding. Position 398 is a phosphoserine; by PKA (serine 398). Tyrosine 416, tyrosine 419, and tyrosine 421 each carry sulfotyrosine. One copy of the Hemopexin 4 repeat lies at 420 to 473 (DYDMDWLVPATCEPIQSVYFFSGDKYYRVNLRTRRVDSVNPPYPRSIAQYWLGC).

As to quaternary structure, interacts with SERPINE1/PAI1, insulin and C1QBP. Sulfated on tyrosine residues. In terms of processing, N- and O-glycosylated. Post-translationally, it has been suggested that the active SMB domain may be permitted considerable disulfide bond heterogeneity or variability, thus two alternate disulfide patterns based on 3D structures are described with 1 disulfide bond conserved in both. Plasma.

It localises to the secreted. Its subcellular location is the extracellular space. Vitronectin is a cell adhesion and spreading factor found in serum and tissues. Vitronectin interact with glycosaminoglycans and proteoglycans. Is recognized by certain members of the integrin family and serves as a cell-to-substrate adhesion molecule. Inhibitor of the membrane-damaging effect of the terminal cytolytic complement pathway. The chain is Vitronectin (Vtn) from Mus musculus (Mouse).